An 864-amino-acid polypeptide reads, in one-letter code: Leucine--tRNA ligase (864 aa).

Positions 42–52 (PYPSGKLHMGH) match the 'HIGH' region motif. Positions 624–628 (KMSKS) match the 'KMSKS' region motif. An ATP-binding site is contributed by lysine 627.

This sequence belongs to the class-I aminoacyl-tRNA synthetase family.

It localises to the cytoplasm. The enzyme catalyses tRNA(Leu) + L-leucine + ATP = L-leucyl-tRNA(Leu) + AMP + diphosphate. This Paraburkholderia phymatum (strain DSM 17167 / CIP 108236 / LMG 21445 / STM815) (Burkholderia phymatum) protein is Leucine--tRNA ligase.